We begin with the raw amino-acid sequence, 114 residues long: UPF0212 protein Mbur_0968 (114 aa).

Belongs to the UPF0212 family.

The sequence is that of UPF0212 protein Mbur_0968 from Methanococcoides burtonii (strain DSM 6242 / NBRC 107633 / OCM 468 / ACE-M).